Reading from the N-terminus, the 189-residue chain is MSLINKEILPFTAQAYDPKKDEFKEVTQEDFKGSWNVVCFYPADFSFVCPTELEDLQNQYAKLQELGVNVYSVSTDTHFVHKAWHDHSDAISKLEYSMIGDPSQTITRNFDVLDEESGLAQRGTFIIDPDGVVQAAEINADGIGRDASTLVNKIKAAQYVRQHPGEVCPAKWEEGSESLQPGLDLVGKI.

The 158-residue stretch at 2 to 159 (SLINKEILPF…LVNKIKAAQY (158 aa)) folds into the Thioredoxin domain. Cys49 serves as the catalytic Cysteine sulfenic acid (-SOH) intermediate.

This sequence belongs to the peroxiredoxin family. AhpC/Prx1 subfamily. As to quaternary structure, homodimer; disulfide-linked, upon oxidation. 5 homodimers assemble to form a ring-like decamer.

It localises to the cytoplasm. It carries out the reaction a hydroperoxide + NADH + H(+) = an alcohol + NAD(+) + H2O. Thiol-specific peroxidase that catalyzes the reduction of hydrogen peroxide and organic hydroperoxides to water and alcohols, respectively. Plays a role in cell protection against oxidative stress by detoxifying peroxides. The protein is Alkyl hydroperoxide reductase C (ahpC) of Staphylococcus epidermidis (strain ATCC 12228 / FDA PCI 1200).